We begin with the raw amino-acid sequence, 266 residues long: UPF0294 protein YafD (266 aa).

Belongs to the UPF0294 family.

Its subcellular location is the cytoplasm. This Escherichia coli O157:H7 protein is UPF0294 protein YafD (yafD).